Reading from the N-terminus, the 716-residue chain is Exocyst complex component 8 (716 aa).

S15 carries the phosphoserine modification. A compositionally biased stretch (low complexity) spans 110–119 (STGEDTAGAG). Positions 110–149 (STGEDTAGAGPRERGAAQAGFLPGPAGVPREGPGTGEEGK) are disordered. Residues 173–273 (YLVYNGDLVE…WLEVLEETKR (101 aa)) enclose the PH domain. Residues 275–284 (LSDKRRREQE) show a composition bias toward basic and acidic residues. Residues 275 to 319 (LSDKRRREQEEAAALRAPPPVTSKGSNPFEDEAEEELATPEAEEE) form a disordered region. A compositionally biased stretch (acidic residues) spans 303–319 (FEDEAEEELATPEAEEE). T313 is modified (phosphothreonine).

Belongs to the EXO84 family. In terms of assembly, the exocyst complex is composed of EXOC1, EXOC2, EXOC3, EXOC4, EXOC5, EXOC6, EXOC7 and EXOC8. Interacts (via PH domain) with GTP-bound RALA and RALB. Interacts with SH3BP1; required for the localization of both SH3BP1 and the exocyst to the leading edge of migrating cells.

It is found in the cytoplasm. Its subcellular location is the perinuclear region. The protein resides in the cell projection. It localises to the growth cone. Its function is as follows. Component of the exocyst complex involved in the docking of exocytic vesicles with fusion sites on the plasma membrane. This chain is Exocyst complex component 8 (Exoc8), found in Rattus norvegicus (Rat).